A 916-amino-acid chain; its full sequence is Rab3 GTPase-activating protein catalytic subunit (916 aa).

Positions 530–574 are disordered; sequence NSKRKSEGMVGKASSEEEEDEDDDEGEFFDCDDLTAGAGSPTKAV. Phosphoserine is present on residues Ser-543 and Ser-544. The span at 545 to 562 shows a compositional bias: acidic residues; sequence EEEEDEDDDEGEFFDCDD.

This sequence belongs to the Rab3-GAP catalytic subunit family. As to quaternary structure, the Rab3 GTPase-activating complex is a heterodimer composed of Rab3GAP1 and Rab3-GAP.

The protein localises to the cytoplasm. Catalytic subunit of the Rab3 GTPase-activating (Rab3GAP) complex composed of Rab3-GAP and Rab3GAP1, which has both GTPase-activating protein (GAP) activity towards Rab3, and guanine nucleotide exchange factor (GEF) activity towards Rab18. As part of the Rab3GAP complex, required for the rapid induction and sustained expression of synaptic homeostasis at the neuromuscular junction (NMJ). Also participates in the regulation of autophagy in tissues such as larval fat cells and adult muscles. The Rab3GAP complex, acts as a GAP for Rab3 by converting active Rab3-GTP to the inactive form Rab3-GDP. At the neuromuscular junction (NMJ), forms a presynaptic signaling mechanism with Rab3 that regulates progression of synaptic homeostasis at a late stage of vesicle release. Within this mechanism Rab3-GTP acts, directly or indirectly, to inhibit the progression of synaptic homeostasis, and Rab3-GAP functions to inactivate this action of Rab3-GTP. The Rab3GAP complex, acts as a GEF for Rab18 by promoting the conversion of inactive Rab18-GDP to the active form Rab18-GTP. Regulates autophagy as part of a Rab3GAP-Rab18 module. Once Rab18 is activated by the GEF Rab3GAP complex, the Rab3GAP-Rab18 module localizes to autophagosomes, and regulates autolysosome formation and maturation together with the Rab18 interacting effector, the PI3K/Vps34 Complex I. This chain is Rab3 GTPase-activating protein catalytic subunit, found in Drosophila melanogaster (Fruit fly).